The primary structure comprises 370 residues: ADP-ribosylhydrolase ARH3 (370 aa).

E47 contacts Mg(2+). Residue T70 is modified to Phosphothreonine. Residues T82, D83, and D84 each contribute to the Mg(2+) site. Residue D83 participates in substrate binding. Substrate-binding positions include 152–158 (KGSYGNG), H188, L241, and I277. Residues D320, D322, and T323 each coordinate Mg(2+).

This sequence belongs to the ADP-ribosylglycohydrolase family. Monomer. Mg(2+) serves as cofactor. In terms of tissue distribution, ubiquitous.

It is found in the nucleus. The protein resides in the cytoplasm. Its subcellular location is the chromosome. The protein localises to the mitochondrion matrix. It catalyses the reaction [(1''-&gt;2')-ADP-alpha-D-ribose](n) + H2O = [(1''-&gt;2')-ADP-alpha-D-ribose](n-1) + ADP-D-ribose. The enzyme catalyses 1''-O-acetyl-ADP-alpha-D-ribose + H2O = ADP-D-ribose + acetate + H(+). The catalysed reaction is O-(ADP-D-ribosyl)-L-seryl-[protein] + H2O = ADP-D-ribose + L-seryl-[protein]. It carries out the reaction alpha-NAD(+) + H2O = ADP-D-ribose + nicotinamide + H(+). Its activity is regulated as follows. The protein undergoes a dramatic conformational switch from closed to open states upon substrate-binding, which enables specific substrate recognition for the 1''-O-linkage. The glutamate flap (Glu-47) blocks substrate entrance to Mg(2+) in the unliganded closed state. In presence of substrate, Glu-47 is ejected from the active site: this closed-to-open transition significantly widens the substrate-binding channel and precisely positions the scissile 1''-O-linkage for cleavage while securing tightly 2'- and 3'-hydroxyls of ADP-ribose. ADP-ribosylhydrolase that preferentially hydrolyzes the scissile alpha-O-linkage attached to the anomeric C1'' position of ADP-ribose and acts on different substrates, such as proteins ADP-ribosylated on serine and threonine, free poly(ADP-ribose) and O-acetyl-ADP-D-ribose. Specifically acts as a serine mono-ADP-ribosylhydrolase by mediating the removal of mono-ADP-ribose attached to serine residues on proteins, thereby playing a key role in DNA damage response. Serine ADP-ribosylation of proteins constitutes the primary form of ADP-ribosylation of proteins in response to DNA damage. Does not hydrolyze ADP-ribosyl-arginine, -cysteine, -diphthamide, or -asparagine bonds. Also able to degrade protein free poly(ADP-ribose), which is synthesized in response to DNA damage: free poly(ADP-ribose) acts as a potent cell death signal and its degradation by ADPRHL2 protects cells from poly(ADP-ribose)-dependent cell death, a process named parthanatos. Also hydrolyzes free poly(ADP-ribose) in mitochondria. Specifically digests O-acetyl-ADP-D-ribose, a product of deacetylation reactions catalyzed by sirtuins. Specifically degrades 1''-O-acetyl-ADP-D-ribose isomer, rather than 2''-O-acetyl-ADP-D-ribose or 3''-O-acetyl-ADP-D-ribose isomers. The chain is ADP-ribosylhydrolase ARH3 (Adprs) from Mus musculus (Mouse).